The sequence spans 371 residues: Glycosyltransferase 8 domain-containing protein 1 (371 aa).

Residues 1 to 7 (MSFRKVN) are Cytoplasmic-facing. Residues 8-28 (IIIWVLAVVLFLLVLHHNFLS) form a helical; Signal-anchor for type II membrane protein membrane-spanning segment. Residues 29–371 (LSSLLKNDIS…RRHMDTSNIK (343 aa)) are Lumenal-facing. An N-linked (GlcNAc...) asparagine glycan is attached at Asn257.

The protein belongs to the glycosyltransferase 8 family.

Its subcellular location is the membrane. The protein is Glycosyltransferase 8 domain-containing protein 1 (Glt8d1) of Mus musculus (Mouse).